The sequence spans 304 residues: Cbb3-type cytochrome c oxidase subunit CcoP (304 aa).

2 consecutive transmembrane segments (helical) span residues 11–31 (LYVAGITVVSLIFCLVVLIVA) and 61–81 (WWAGLFLVTIAFAVIYLALYP). 2 Cytochrome c domains span residues 129-209 (QAMA…LSLS) and 216-296 (VAAQ…WSLS). Residues cysteine 142, cysteine 145, histidine 146, methionine 185, cysteine 228, cysteine 231, histidine 232, and methionine 273 each contribute to the heme c site.

The protein belongs to the CcoP / FixP family. Component of the cbb3-type cytochrome c oxidase at least composed of CcoN, CcoO, CcoQ and CcoP. It depends on heme c as a cofactor.

The protein resides in the cell inner membrane. It participates in energy metabolism; oxidative phosphorylation. In terms of biological role, C-type cytochrome. Part of the cbb3-type cytochrome c oxidase complex. CcoP subunit is required for transferring electrons from donor cytochrome c via its heme groups to CcoO subunit. From there, electrons are shuttled to the catalytic binuclear center of CcoN subunit where oxygen reduction takes place. The complex also functions as a proton pump. This is Cbb3-type cytochrome c oxidase subunit CcoP from Rubrivivax gelatinosus (Rhodocyclus gelatinosus).